A 215-amino-acid polypeptide reads, in one-letter code: Ras-related protein Rab-14 (215 aa).

A2 is modified (N-acetylalanine). G21, V22, G23, K24, S25, C26, A38, D39, C40, H42, and T43 together coordinate GTP. Residue S25 participates in Mg(2+) binding. The Switch 1 motif lies at 42–47; the sequence is HTIGVE. Mg(2+)-binding residues include T43 and D66. The Switch 2 motif lies at 68–77; it reads AGQERFRAVT. GTP is bound by residues G69, N124, K125, D127, A155, and K156. The disordered stretch occupies residues 188–215; it reads SGVQHKPSAPQGGRLTSEPQPQREGCGC. Residues C213 and C215 are each lipidated (S-geranylgeranyl cysteine). At C215 the chain carries Cysteine methyl ester.

Belongs to the small GTPase superfamily. Rab family. It depends on Mg(2+) as a cofactor.

The protein localises to the recycling endosome. It localises to the early endosome membrane. The protein resides in the golgi apparatus membrane. Its subcellular location is the golgi apparatus. It is found in the trans-Golgi network membrane. The protein localises to the cytoplasmic vesicle. It localises to the phagosome. The enzyme catalyses GTP + H2O = GDP + phosphate + H(+). Its activity is regulated as follows. Regulated by guanine nucleotide exchange factors (GEFs) including DENND6A and DENND6B which promote the exchange of bound GDP for free GTP. Regulated by GTPase activating proteins (GAPs) which increase the GTP hydrolysis activity. Inhibited by GDP dissociation inhibitors (GDIs) which prevent Rab-GDP dissociation. The small GTPases Rab are key regulators of intracellular membrane trafficking, from the formation of transport vesicles to their fusion with membranes. Rabs cycle between an inactive GDP-bound form and an active GTP-bound form that is able to recruit to membranes different set of downstream effectors directly responsible for vesicle formation, movement, tethering and fusion. Involved in membrane trafficking between the Golgi complex and endosomes during early embryonic development. Regulates the Golgi to endosome transport of FGFR-containing vesicles during early development, a key process for developing basement membrane and epiblast and primitive endoderm lineages during early postimplantation development. May act by modulating the kinesin KIF16B-cargo association to endosomes. Regulates, together with its guanine nucleotide exchange factor DENND6A, the specific endocytic transport of ADAM10, N-cadherin/CDH2 shedding and cell-cell adhesion. Mediates endosomal tethering and fusion through the interaction with RUFY1 and RAB4B. Interaction with RAB11FIP1 may function in the process of neurite formation. The protein is Ras-related protein Rab-14 (RAB14) of Gallus gallus (Chicken).